The sequence spans 257 residues: NAD-capped RNA hydrolase NudC (257 aa).

Substrate-binding residues include K25 and R69. 2 residues coordinate Zn(2+): C98 and C101. E111 is a substrate binding site. Zn(2+) is bound by residues C116 and C119. Residue Y124 coordinates substrate. The 124-residue stretch at 125–248 (PQIAPCIIVA…TVARRLIEDT (124 aa)) folds into the Nudix hydrolase domain. 3 residues coordinate a divalent metal cation: A158, E174, and E178. The short motif at 159–180 (GFVEVGETLEQAVAREVMEESG) is the Nudix box element. 192 to 199 (QPWPFPQS) is a substrate binding site. E219 is an a divalent metal cation binding site. A241 provides a ligand contact to substrate.

Belongs to the Nudix hydrolase family. NudC subfamily. As to quaternary structure, homodimer. The cofactor is Mg(2+). Mn(2+) serves as cofactor. Zn(2+) is required as a cofactor.

It carries out the reaction a 5'-end NAD(+)-phospho-ribonucleoside in mRNA + H2O = a 5'-end phospho-adenosine-phospho-ribonucleoside in mRNA + beta-nicotinamide D-ribonucleotide + 2 H(+). The enzyme catalyses NAD(+) + H2O = beta-nicotinamide D-ribonucleotide + AMP + 2 H(+). The catalysed reaction is NADH + H2O = reduced beta-nicotinamide D-ribonucleotide + AMP + 2 H(+). MRNA decapping enzyme that specifically removes the nicotinamide adenine dinucleotide (NAD) cap from a subset of mRNAs by hydrolyzing the diphosphate linkage to produce nicotinamide mononucleotide (NMN) and 5' monophosphate mRNA. The NAD-cap is present at the 5'-end of some mRNAs and stabilizes RNA against 5'-processing. Has preference for mRNAs with a 5'-end purine. Catalyzes the hydrolysis of a broad range of dinucleotide pyrophosphates. The chain is NAD-capped RNA hydrolase NudC from Escherichia coli O157:H7.